The sequence spans 186 residues: MDLKVLREEARSILIDVVERSAIKKGQLFVLGLSSSEVLGGRIGQHSSLEVGEVIVKVVLEELSSRGIHLAVQGCEHINRALVLEESVAEEYQLELVNVLPSLHAGGSGQLAAFKYMKQPVEVEAIAAHAGLDIGDTSIGMHVKRVQVPLVPIQRELGGAHVTALASRPKLIGGVRARYQPDPIRK.

This sequence belongs to the UPF0340 family.

The chain is UPF0340 protein SZO_02480 from Streptococcus equi subsp. zooepidemicus (strain H70).